We begin with the raw amino-acid sequence, 346 residues long: Tubulin-specific chaperone C (346 aa).

N-acetylmethionine is present on M1. The tract at residues 1-26 is disordered; sequence MESVSCSAAAVRTGDMESQRDLSLVP. A phosphoserine mark is found at S80 and S168. Residues 140 to 171 are disordered; the sequence is KTRGKDAASSTKVDAAPGIPPAVESIQDSPLP. A C-CAP/cofactor C-like domain is found at 171–323; sequence PKKAEGDLGP…NWNDVDDFNW (153 aa).

The protein belongs to the TBCC family. In terms of assembly, supercomplex made of cofactors A to E. Cofactors A and D function by capturing and stabilizing tubulin in a quasi-native conformation. Cofactor E binds to the cofactor D-tubulin complex; interaction with cofactor C then causes the release of tubulin polypeptides that are committed to the native state. Expressed in the retina. Expressed in the rod and cone photoreceptors, extending from the inner segments (IS), through the outer nuclear layer (ONL) and into the synapses in the outer plexiform layer (OPL). Strongly expressed to the photoreceptor connecting cilium at the tips of the IS (at protein level).

It is found in the cytoplasm. Functionally, tubulin-folding protein; involved in the final step of the tubulin folding pathway. This chain is Tubulin-specific chaperone C (TBCC), found in Homo sapiens (Human).